A 146-amino-acid chain; its full sequence is Phospholipase A2, membrane associated (146 aa).

A signal peptide spans 1–21; sequence MKVLLLLAASIMAFGSIQVQG. Disulfide bonds link Cys47-Cys139, Cys49-Cys65, Cys64-Cys119, Cys70-Cys146, Cys71-Cys112, Cys80-Cys105, and Cys98-Cys110. Residues His48, Gly50, and Gly52 each coordinate Ca(2+). His68 is an active-site residue. Asp69 provides a ligand contact to Ca(2+). The active site involves Asp113.

The protein belongs to the phospholipase A2 family. The cofactor is Ca(2+). Mainly in the Paneth cells adjacent to the stem population in the small intestines.

Its subcellular location is the secreted. The protein resides in the cell membrane. It localises to the mitochondrion outer membrane. The catalysed reaction is a 1,2-diacyl-sn-glycero-3-phosphoethanolamine + H2O = a 1-acyl-sn-glycero-3-phosphoethanolamine + a fatty acid + H(+). It catalyses the reaction 1-hexadecanoyl-2-(9Z-octadecenoyl)-sn-glycero-3-phosphoethanolamine + H2O = 1-hexadecanoyl-sn-glycero-3-phosphoethanolamine + (9Z)-octadecenoate + H(+). It carries out the reaction 1-hexadecanoyl-2-(9Z,12Z-octadecadienoyl)-sn-glycero-3-phosphoethanolamine + H2O = 1-hexadecanoyl-sn-glycero-3-phosphoethanolamine + (9Z,12Z)-octadecadienoate + H(+). The enzyme catalyses 1-hexadecanoyl-2-(5Z,8Z,11Z,14Z-eicosatetraenoyl)-sn-glycero-3-phosphoethanolamine + H2O = 1-hexadecanoyl-sn-glycero-3-phosphoethanolamine + (5Z,8Z,11Z,14Z)-eicosatetraenoate + H(+). The catalysed reaction is N-hexadecanoyl-1,2-di-(9Z-octadecenoyl)-sn-glycero-3-phosphoethanolamine + H2O = N-hexadecanoyl-1-(9Z-octadecenoyl)-sn-glycero-3-phosphoethanolamine + (9Z)-octadecenoate + H(+). It catalyses the reaction 1,2-dihexadecanoyl-sn-glycero-3-phospho-(1'-sn-glycerol) + H2O = 1-hexadecanoyl-sn-glycero-3-phospho-(1'-sn-glycerol) + hexadecanoate + H(+). It carries out the reaction 1-hexadecanoyl-2-(9Z-octadecenoyl)-sn-glycero-3-phosphoglycerol + H2O = 1-hexadecanoyl-sn-glycero-3-phosphoglycerol + (9Z)-octadecenoate + H(+). The enzyme catalyses 1-hexadecanoyl-2-(9Z-octadecenoyl)-sn-glycero-3-phospho-(1'-sn-glycerol) + H2O = 1-hexadecanoyl-sn-glycero-3-phospho-(1'-sn-glycerol) + (9Z)-octadecenoate + H(+). The catalysed reaction is a 1,2-diacyl-sn-glycero-3-phosphocholine + H2O = a 1-acyl-sn-glycero-3-phosphocholine + a fatty acid + H(+). It catalyses the reaction 1,2-dihexadecanoyl-sn-glycero-3-phosphocholine + H2O = 1-hexadecanoyl-sn-glycero-3-phosphocholine + hexadecanoate + H(+). It carries out the reaction 1-hexadecanoyl-2-(9Z-octadecenoyl)-sn-glycero-3-phosphocholine + H2O = 1-hexadecanoyl-sn-glycero-3-phosphocholine + (9Z)-octadecenoate + H(+). The enzyme catalyses 1-hexadecanoyl-2-(9Z,12Z-octadecadienoyl)-sn-glycero-3-phosphocholine + H2O = (9Z,12Z)-octadecadienoate + 1-hexadecanoyl-sn-glycero-3-phosphocholine + H(+). The catalysed reaction is 1-hexadecanoyl-2-(4Z,7Z,10Z,13Z,16Z,19Z-docosahexaenoyl)-sn-glycero-3-phosphocholine + H2O = (4Z,7Z,10Z,13Z,16Z,19Z)-docosahexaenoate + 1-hexadecanoyl-sn-glycero-3-phosphocholine + H(+). Secretory calcium-dependent phospholipase A2 that primarily targets extracellular phospholipids with implications in host antimicrobial defense, inflammatory response and tissue regeneration. Hydrolyzes the ester bond of the fatty acyl group attached at sn-2 position of phospholipids (phospholipase A2 activity) with preference for phosphatidylethanolamines and phosphatidylglycerols over phosphatidylcholines. Contributes to lipid remodeling of cellular membranes and generation of lipid mediators involved in pathogen clearance. Displays bactericidal activity against Gram-positive bacteria by directly hydrolyzing phospholipids of the bacterial membrane. Upon sterile inflammation, targets membrane phospholipids of extracellular mitochondria released from activated platelets, generating free unsaturated fatty acids such as arachidonate that is used by neighboring leukocytes to synthesize inflammatory eicosanoids such as leukotrienes. Simultaneously, by compromising mitochondrial membrane integrity, promotes the release in circulation of potent damage-associated molecular pattern molecules that activate the innate immune response. Plays a stem cell regulator role in the intestinal crypt. Within intracellular compartment mediates Paneth cell differentiation and its stem cell supporting functions by inhibiting Wnt signaling pathway in intestinal stem cell (ICS). Secreted in the intestinal lumen upon inflammation, acts in an autocrine way and promotes prostaglandin E2 synthesis that stimulates Wnt signaling pathway in ICS cells and tissue regeneration. May play a role in the biosynthesis of N-acyl ethanolamines that regulate energy metabolism and inflammation. Hydrolyzes N-acyl phosphatidylethanolamines to N-acyl lysophosphatidylethanolamines, which are further cleaved by a lysophospholipase D to release N-acyl ethanolamines. Independent of its catalytic activity, acts as a ligand for integrins. Binds to and activates integrins ITGAV:ITGB3, ITGA4:ITGB1 and ITGA5:ITGB1. Binds to a site (site 2) which is distinct from the classical ligand-binding site (site 1) and induces integrin conformational changes and enhanced ligand binding to site 1. Induces cell proliferation in an integrin-dependent manner. The chain is Phospholipase A2, membrane associated (Pla2g2a) from Mus musculus (Mouse).